A 218-amino-acid polypeptide reads, in one-letter code: Small ribosomal subunit protein uS3c (218 aa).

The 76-residue stretch at 43-118 folds into the KH type-2 domain; that stretch reads IKNYVQKNTK…KFNIAITKIA (76 aa).

Belongs to the universal ribosomal protein uS3 family. As to quaternary structure, part of the 30S ribosomal subunit.

It localises to the plastid. The protein resides in the chloroplast. This is Small ribosomal subunit protein uS3c (rps3) from Coffea arabica (Arabian coffee).